The primary structure comprises 547 residues: Chaperonin GroEL (547 aa).

ATP is bound by residues 30 to 33 (TLGP), Lys51, 87 to 91 (DGTTT), Gly414, 478 to 480 (NAA), and Asp494.

The protein belongs to the chaperonin (HSP60) family. In terms of assembly, forms a cylinder of 14 subunits composed of two heptameric rings stacked back-to-back. Interacts with the co-chaperonin GroES.

The protein resides in the cytoplasm. It catalyses the reaction ATP + H2O + a folded polypeptide = ADP + phosphate + an unfolded polypeptide.. Functionally, together with its co-chaperonin GroES, plays an essential role in assisting protein folding. The GroEL-GroES system forms a nano-cage that allows encapsulation of the non-native substrate proteins and provides a physical environment optimized to promote and accelerate protein folding. The chain is Chaperonin GroEL from Klebsiella pneumoniae.